A 354-amino-acid polypeptide reads, in one-letter code: Ferrochelatase (354 aa).

Residues H204 and E306 each coordinate Fe cation.

It belongs to the ferrochelatase family.

The protein localises to the cytoplasm. The catalysed reaction is heme b + 2 H(+) = protoporphyrin IX + Fe(2+). It participates in porphyrin-containing compound metabolism; protoheme biosynthesis; protoheme from protoporphyrin-IX: step 1/1. Functionally, catalyzes the ferrous insertion into protoporphyrin IX. The sequence is that of Ferrochelatase from Coxiella burnetii (strain RSA 493 / Nine Mile phase I).